Here is a 167-residue protein sequence, read N- to C-terminus: Transmembrane protein 229B (167 aa).

Topologically, residues 1-14 are cytoplasmic; sequence MAAAEPLTAFSRWY. Residues 15 to 35 traverse the membrane as a helical segment; the sequence is LYAIHGYFCEVMFTAAWEFVV. At 36–40 the chain is on the extracellular side; that stretch reads NFNWK. A helical membrane pass occupies residues 41–61; sequence FPGVTSVWALFIYGTSILIVE. Residues 62-72 lie on the Cytoplasmic side of the membrane; it reads KMYLYLKDKCH. Residues 73 to 93 form a helical membrane-spanning segment; sequence ILVRCFIYTLWTYLWEFTTGL. Residues 94 to 109 lie on the Extracellular side of the membrane; the sequence is ILRQFNACPWDYSQFD. The helical transmembrane segment at 110 to 130 threads the bilayer; it reads FDFMGLITLEYAIPWFCASFI. Over 131–167 the chain is Cytoplasmic; it reads MEQLVIRNTLRLRFDETAEPGAPTVPVALANGHVKTD.

This sequence belongs to the TMEM229 family.

It localises to the membrane. This Gallus gallus (Chicken) protein is Transmembrane protein 229B (TMEM229B).